A 274-amino-acid chain; its full sequence is Formamidopyrimidine-DNA glycosylase (274 aa).

The Schiff-base intermediate with DNA role is filled by Pro2. The Proton donor role is filled by Glu3. The active-site Proton donor; for beta-elimination activity is Lys58. Residues His91 and Arg110 each contribute to the DNA site. The FPG-type zinc finger occupies 238-272 (QVYDKTGQECVRCGTIIEKIQLGGRGTHFCPNCQR). The active-site Proton donor; for delta-elimination activity is the Arg262.

The protein belongs to the FPG family. As to quaternary structure, monomer. Zn(2+) is required as a cofactor.

It carries out the reaction Hydrolysis of DNA containing ring-opened 7-methylguanine residues, releasing 2,6-diamino-4-hydroxy-5-(N-methyl)formamidopyrimidine.. The enzyme catalyses 2'-deoxyribonucleotide-(2'-deoxyribose 5'-phosphate)-2'-deoxyribonucleotide-DNA = a 3'-end 2'-deoxyribonucleotide-(2,3-dehydro-2,3-deoxyribose 5'-phosphate)-DNA + a 5'-end 5'-phospho-2'-deoxyribonucleoside-DNA + H(+). Its function is as follows. Involved in base excision repair of DNA damaged by oxidation or by mutagenic agents. Acts as a DNA glycosylase that recognizes and removes damaged bases. Has a preference for oxidized purines, such as 7,8-dihydro-8-oxoguanine (8-oxoG). Has AP (apurinic/apyrimidinic) lyase activity and introduces nicks in the DNA strand. Cleaves the DNA backbone by beta-delta elimination to generate a single-strand break at the site of the removed base with both 3'- and 5'-phosphates. In Streptococcus pneumoniae (strain ATCC BAA-255 / R6), this protein is Formamidopyrimidine-DNA glycosylase.